A 365-amino-acid chain; its full sequence is Galactoside alpha-(1,2)-fucosyltransferase 1 (365 aa).

Over 1–8 the chain is Cytoplasmic; sequence MWLRSHRQ. Residues 9–25 form a helical; Signal-anchor for type II membrane protein membrane-spanning segment; that stretch reads LCLAFLLVCVLSVIFFL. Over 26 to 365 the chain is Lumenal; the sequence is HIHQDSFPHG…LSPLWTLAKP (340 aa). N-linked (GlcNAc...) asparagine glycosylation is found at asparagine 65 and asparagine 327.

This sequence belongs to the glycosyltransferase 11 family.

The protein localises to the golgi apparatus. It localises to the golgi stack membrane. It catalyses the reaction a beta-D-galactosyl-(1-&gt;4)-N-acetyl-beta-D-glucosaminyl derivative + GDP-beta-L-fucose = an alpha-L-Fuc-(1-&gt;2)-beta-D-Gal-(1-&gt;4)-beta-D-GlcNAc derivative + GDP + H(+). The enzyme catalyses a ganglioside GA1 + GDP-beta-L-fucose = a ganglioside Fuc-GA1 + GDP + H(+). It carries out the reaction a beta-D-Gal-(1-&gt;3)-beta-D-GlcNAc-(1-&gt;3)-beta-D-Gal-(1-&gt;4)-beta-D-Glc-(1&lt;-&gt;1')-Cer(d18:1(4E)) + GDP-beta-L-fucose = alpha-L-fucosyl-(1-&gt;2)- beta-D-galactosyl-(1-&gt;3)-N-acetyl-beta-D-glucosaminyl-(1-&gt;3)-beta-D-galactosyl-(1-&gt;4)-beta-D-glucosyl-(1&lt;-&gt;1')-N-acylsphing-4-enine + GDP + H(+). The catalysed reaction is a neolactoside nLc4Cer(d18:1(4E)) + GDP-beta-L-fucose = a neolactoside IV(2)-alpha-Fuc-nLc4Cer(d18:1(4E)) + GDP + H(+). It catalyses the reaction a ganglioside GM1 + GDP-beta-L-fucose = a ganglioside Fuc-GM1 + GDP + H(+). The enzyme catalyses beta-D-galactosyl-(1-&gt;3)-N-acetyl-D-galactosamine + GDP-beta-L-fucose = alpha-L-fucosyl-(1-&gt;2)-beta-D-galactosyl-(1-&gt;3)-N-acetyl-D-galactosamine + GDP + H(+). Its pathway is protein modification; protein glycosylation. Functionally, catalyzes the transfer of L-fucose, from a guanosine diphosphate-beta-L-fucose, to the terminal galactose residue of glycoconjugates through an alpha(1,2) linkage leading to H antigen synthesis that is an intermediate substrate in the synthesis of ABO blood group antigens. H antigen is essential for maturation of the glomerular layer of the main olfactory bulb, in cell migration and early cell-cell contacts during tumor associated angiogenesis. Preferentially fucosylates soluble lactose and to a lesser extent fucosylates glycolipids gangliosides GA1 and GM1a. The chain is Galactoside alpha-(1,2)-fucosyltransferase 1 from Homo sapiens (Human).